The sequence spans 210 residues: Ribosomal RNA large subunit methyltransferase E (210 aa).

Glycine 60, tryptophan 62, aspartate 80, aspartate 96, and aspartate 122 together coordinate S-adenosyl-L-methionine. Lysine 162 serves as the catalytic Proton acceptor.

It belongs to the class I-like SAM-binding methyltransferase superfamily. RNA methyltransferase RlmE family.

The protein localises to the cytoplasm. It carries out the reaction uridine(2552) in 23S rRNA + S-adenosyl-L-methionine = 2'-O-methyluridine(2552) in 23S rRNA + S-adenosyl-L-homocysteine + H(+). Its function is as follows. Specifically methylates the uridine in position 2552 of 23S rRNA at the 2'-O position of the ribose in the fully assembled 50S ribosomal subunit. This Dichelobacter nodosus (strain VCS1703A) protein is Ribosomal RNA large subunit methyltransferase E.